We begin with the raw amino-acid sequence, 179 residues long: Repressor of phase 1 flagellin gene (179 aa).

Functionally, transcriptional repressor of the FliC phase-1 flagellin. The sequence is that of Repressor of phase 1 flagellin gene (fljA) from Salmonella abortus-equi.